We begin with the raw amino-acid sequence, 129 residues long: Cuticle protein 12.5 (129 aa).

A run of 10 repeats spans residues 7 to 10 (AAPA), 15 to 18 (AAPA), 23 to 26 (AAPA), 28 to 31 (AAPV), 37 to 40 (AAPA), 67 to 70 (AAPA), 79 to 82 (AAPA), 91 to 94 (AAPA), 103 to 106 (AAPA), and 117 to 120 (AAPA).

In terms of biological role, component of the cuticle of migratory locust which contains more than 100 different structural proteins. The chain is Cuticle protein 12.5 from Locusta migratoria (Migratory locust).